The chain runs to 185 residues: Elongation factor P (185 aa).

This sequence belongs to the elongation factor P family.

It is found in the cytoplasm. The protein operates within protein biosynthesis; polypeptide chain elongation. Involved in peptide bond synthesis. Stimulates efficient translation and peptide-bond synthesis on native or reconstituted 70S ribosomes in vitro. Probably functions indirectly by altering the affinity of the ribosome for aminoacyl-tRNA, thus increasing their reactivity as acceptors for peptidyl transferase. This Nitratidesulfovibrio vulgaris (strain DSM 19637 / Miyazaki F) (Desulfovibrio vulgaris) protein is Elongation factor P.